The primary structure comprises 218 residues: Phosphoglycolate phosphatase (218 aa).

Residue aspartate 7 is the Nucleophile of the active site. Positions 7, 9, and 167 each coordinate Mg(2+).

The protein belongs to the HAD-like hydrolase superfamily. CbbY/CbbZ/Gph/YieH family. Mg(2+) serves as cofactor.

The enzyme catalyses 2-phosphoglycolate + H2O = glycolate + phosphate. The protein operates within organic acid metabolism; glycolate biosynthesis; glycolate from 2-phosphoglycolate: step 1/1. Functionally, specifically catalyzes the dephosphorylation of 2-phosphoglycolate. Is involved in the dissimilation of the intracellular 2-phosphoglycolate formed during the DNA repair of 3'-phosphoglycolate ends, a major class of DNA lesions induced by oxidative stress. The protein is Phosphoglycolate phosphatase of Cereibacter sphaeroides (strain ATCC 17029 / ATH 2.4.9) (Rhodobacter sphaeroides).